We begin with the raw amino-acid sequence, 61 residues long: Conotoxin TeAr154 (61 aa).

The signal sequence occupies residues 1–19; it reads MHCLPVFVILLLLTASGLS. The propeptide occupies 20 to 47; that stretch reads VDARPKTEDDVPLSSFRDNTKSTLQRLL. 4-carboxyglutamate is present on E57.

Contains 2 disulfide bonds that can be either 'C1-C3, C2-C4' or 'C1-C4, C2-C3', since these disulfide connectivities have been observed for conotoxins with cysteine framework V (for examples, see AC P0DQQ7 and AC P81755). Post-translationally, contains 2 disulfide bonds. Expressed by the venom duct.

Its subcellular location is the secreted. In Conus textile (Cloth-of-gold cone), this protein is Conotoxin TeAr154.